A 200-amino-acid chain; its full sequence is Recombination protein RecR (200 aa).

The C4-type zinc finger occupies 57–72; it reads CRLCRTLTEEELCPQC. Residues 80 to 175 form the Toprim domain; it reads TLLCVVEGPT…VASRIAHGVP (96 aa).

Belongs to the RecR family.

In terms of biological role, may play a role in DNA repair. It seems to be involved in an RecBC-independent recombinational process of DNA repair. It may act with RecF and RecO. This Pseudomonas syringae pv. tomato (strain ATCC BAA-871 / DC3000) protein is Recombination protein RecR.